Consider the following 342-residue polypeptide: Probable dual-specificity RNA methyltransferase RlmN (342 aa).

The active-site Proton acceptor is glutamate 91. In terms of domain architecture, Radical SAM core spans 97–326; sequence YRFGNTACVS…CTVRRELGSD (230 aa). A disulfide bond links cysteine 104 and cysteine 331. [4Fe-4S] cluster-binding residues include cysteine 111, cysteine 115, and cysteine 118. S-adenosyl-L-methionine contacts are provided by residues 157–158, serine 189, 212–214, and asparagine 288; these read GE and SLH. The active-site S-methylcysteine intermediate is the cysteine 331.

This sequence belongs to the radical SAM superfamily. RlmN family. Requires [4Fe-4S] cluster as cofactor.

It is found in the cytoplasm. It catalyses the reaction adenosine(2503) in 23S rRNA + 2 reduced [2Fe-2S]-[ferredoxin] + 2 S-adenosyl-L-methionine = 2-methyladenosine(2503) in 23S rRNA + 5'-deoxyadenosine + L-methionine + 2 oxidized [2Fe-2S]-[ferredoxin] + S-adenosyl-L-homocysteine. The catalysed reaction is adenosine(37) in tRNA + 2 reduced [2Fe-2S]-[ferredoxin] + 2 S-adenosyl-L-methionine = 2-methyladenosine(37) in tRNA + 5'-deoxyadenosine + L-methionine + 2 oxidized [2Fe-2S]-[ferredoxin] + S-adenosyl-L-homocysteine. Functionally, specifically methylates position 2 of adenine 2503 in 23S rRNA and position 2 of adenine 37 in tRNAs. The chain is Probable dual-specificity RNA methyltransferase RlmN from Thermoanaerobacter pseudethanolicus (strain ATCC 33223 / 39E) (Clostridium thermohydrosulfuricum).